Reading from the N-terminus, the 370-residue chain is 3-dehydroquinate synthase (370 aa).

Residues 107–111 (GVIGD), 131–132 (TS), lysine 144, and lysine 153 contribute to the NAD(+) site. Zn(2+) is bound by residues glutamate 186, histidine 249, and histidine 267.

Belongs to the sugar phosphate cyclases superfamily. Dehydroquinate synthase family. The cofactor is Co(2+). It depends on Zn(2+) as a cofactor. Requires NAD(+) as cofactor.

Its subcellular location is the cytoplasm. It catalyses the reaction 7-phospho-2-dehydro-3-deoxy-D-arabino-heptonate = 3-dehydroquinate + phosphate. Its pathway is metabolic intermediate biosynthesis; chorismate biosynthesis; chorismate from D-erythrose 4-phosphate and phosphoenolpyruvate: step 2/7. Catalyzes the conversion of 3-deoxy-D-arabino-heptulosonate 7-phosphate (DAHP) to dehydroquinate (DHQ). The polypeptide is 3-dehydroquinate synthase (Jannaschia sp. (strain CCS1)).